A 473-amino-acid polypeptide reads, in one-letter code: H(+)/Cl(-) exchange transporter ClcA (473 aa).

Over 1–32 the chain is Cytoplasmic; that stretch reads MKTDTSTFLAQQIVRLRRRDQIRRLMQRDKTP. Residues 33–69 form a helical membrane-spanning segment; sequence LAILFMAAVVGTLTGLVGVAFEKAVSWVQNMRIGALV. The Periplasmic portion of the chain corresponds to 70 to 76; it reads QVADHAF. Residues 77-100 form a helical membrane-spanning segment; sequence LLWPLAFILSALLAMVGYFLVRKF. Positions 106-110 match the Selectivity filter part_1 motif; sequence GSGIP. Ser-107 is a chloride binding site. Positions 109–116 form an intramembrane region, helical; the sequence is IPEIEGAL. Residues 117–123 are Cytoplasmic-facing; sequence EELRPVR. The next 2 helical transmembrane spans lie at 124–141 and 148–166; these read WWRV…TLGA and EGPT…LDVF. The Selectivity filter part_2 signature appears at 146-150; it reads GREGP. The Cytoplasmic segment spans residues 167 to 176; that stretch reads RMRSAEARHT. 2 consecutive intramembrane regions (helical) follow at residues 177-189 and 193-201; these read LLAT…LSAA and PLAGILFII. Residues 202 to 214 lie on the Cytoplasmic side of the membrane; that stretch reads EEMRPQFRYNLIS. Residues 215–232 traverse the membrane as a helical segment; it reads IKAVFTGVIMSSIVFRIF. Over 233–252 the chain is Periplasmic; sequence NGEAPIIEVGKLSDAPVNTL. The chain crosses the membrane as a helical span at residues 253–281; the sequence is WLYLILGIIFGCVGPVFNSLVLRTQDMFQ. Residues 282-287 are Cytoplasmic-facing; it reads RFHGGE. The helical transmembrane segment at 288 to 309 threads the bilayer; the sequence is IKKWVLMGGAIGGLCGILGLIE. Over 310–329 the chain is Periplasmic; that stretch reads PEAAGGGFNLIPIAAAGNFS. 2 helical membrane-spanning segments follow: residues 330–349 and 355–376; these read VGLL…LCFS and GIFA…MAAA. Residues 355–359 carry the Selectivity filter part_3 motif; that stretch reads GIFAP. Chloride is bound by residues Ile-356 and Phe-357. Residues 377–386 lie on the Periplasmic side of the membrane; that stretch reads VLFPQYHLEA. The helical intramembrane region spans 387 to 401; it reads GTFAIAGMGALMAAS. Positions 402–404 form an intramembrane region, note=Loop between two helices; it reads VRA. An intramembrane region (helical) is located at residues 405–416; the sequence is PLTGIVLVLEMT. Residues 417–421 constitute an intramembrane region (note=Loop between two helices); the sequence is DNYQL. The chain crosses the membrane as a helical span at residues 422-438; sequence ILPMIITCLGATLLAQF. The Cytoplasmic segment spans residues 439–473; the sequence is LGGKPLYSTILARTLAKQDAEQAAKNQNAPAGENT. Residue Tyr-445 participates in chloride binding.

It belongs to the chloride channel (TC 2.A.49) family. ClcA subfamily. Homodimer.

The protein localises to the cell inner membrane. It catalyses the reaction 2 chloride(in) + H(+)(out) = 2 chloride(out) + H(+)(in). Functionally, proton-coupled chloride transporter. Functions as antiport system and exchanges two chloride ions for 1 proton. Probably acts as an electrical shunt for an outwardly-directed proton pump that is linked to amino acid decarboxylation, as part of the extreme acid resistance (XAR) response. The polypeptide is H(+)/Cl(-) exchange transporter ClcA (Salmonella agona (strain SL483)).